Consider the following 691-residue polypeptide: Elongation factor G (691 aa).

The region spanning 10–284 (KMYRNIGIMA…AIVKYLPSPL (275 aa)) is the tr-type G domain. Residues 19–26 (AHIDAGKT), 83–87 (DTPGH), and 137–140 (NKMD) each bind GTP.

It belongs to the TRAFAC class translation factor GTPase superfamily. Classic translation factor GTPase family. EF-G/EF-2 subfamily.

It is found in the cytoplasm. In terms of biological role, catalyzes the GTP-dependent ribosomal translocation step during translation elongation. During this step, the ribosome changes from the pre-translocational (PRE) to the post-translocational (POST) state as the newly formed A-site-bound peptidyl-tRNA and P-site-bound deacylated tRNA move to the P and E sites, respectively. Catalyzes the coordinated movement of the two tRNA molecules, the mRNA and conformational changes in the ribosome. This is Elongation factor G from Clostridium tetani (strain Massachusetts / E88).